The following is a 513-amino-acid chain: MQLNPSEISELIKSRISGLGADAEVRNTGTVISVTDGICRVHGLSGVMQGEMLEFPGNTYGLALNLERDSVGAVVLGEYEHISEGDTVKCTGRILEVPVGKELLGRVVNTLGQPIDGKGPINAKETDVIEKVAPGVIARQSVSQPVQTGLKSIDAMVPIGRGQRELIIGDRQTGKTAVAVDSIINQKGKGVFCVYVAIGQKASTISNVVRKLEEHGAMEYTIVVAATASDSAAMQYLAAYAGCTMGEYFRDRGEDALIVYDDLTKQAWAYRQVSLLLRRPPGREAYPGDVFYLHSRLLERAARVNEDYVAKFTNGAVTGKTGSLTALPVIETQAGDVSAFVPTNVISITDGQIFLETDLFNAGIRPAINAGISVSRVGGAAQTKVIKKLSGGIRTDLAQYRELAAFAQFASDLDDATRKQLERGRRVTELLKQPQYQPLQVWQLAASLYAANNGFLDNVDVKDILPFEKGLHDHLKTKFADLVNRIEDTKDLSKEDEAALRAAIEDFRKSAAF.

Position 169–176 (169–176 (GDRQTGKT)) interacts with ATP.

Belongs to the ATPase alpha/beta chains family. F-type ATPases have 2 components, CF(1) - the catalytic core - and CF(0) - the membrane proton channel. CF(1) has five subunits: alpha(3), beta(3), gamma(1), delta(1), epsilon(1). CF(0) has three main subunits: a(1), b(2) and c(9-12). The alpha and beta chains form an alternating ring which encloses part of the gamma chain. CF(1) is attached to CF(0) by a central stalk formed by the gamma and epsilon chains, while a peripheral stalk is formed by the delta and b chains.

It localises to the cell inner membrane. It carries out the reaction ATP + H2O + 4 H(+)(in) = ADP + phosphate + 5 H(+)(out). Its function is as follows. Produces ATP from ADP in the presence of a proton gradient across the membrane. The alpha chain is a regulatory subunit. This chain is ATP synthase subunit alpha, found in Cupriavidus metallidurans (strain ATCC 43123 / DSM 2839 / NBRC 102507 / CH34) (Ralstonia metallidurans).